A 232-amino-acid chain; its full sequence is Ubiquinone biosynthesis O-methyltransferase (232 aa).

Arg-36, Gly-55, Asp-76, and Met-120 together coordinate S-adenosyl-L-methionine.

This sequence belongs to the methyltransferase superfamily. UbiG/COQ3 family.

The catalysed reaction is a 3-demethylubiquinol + S-adenosyl-L-methionine = a ubiquinol + S-adenosyl-L-homocysteine + H(+). It catalyses the reaction a 3-(all-trans-polyprenyl)benzene-1,2-diol + S-adenosyl-L-methionine = a 2-methoxy-6-(all-trans-polyprenyl)phenol + S-adenosyl-L-homocysteine + H(+). Its pathway is cofactor biosynthesis; ubiquinone biosynthesis. Its function is as follows. O-methyltransferase that catalyzes the 2 O-methylation steps in the ubiquinone biosynthetic pathway. In Burkholderia mallei (strain ATCC 23344), this protein is Ubiquinone biosynthesis O-methyltransferase.